The primary structure comprises 198 residues: MSRYTGSLWKVSRRLNYSVSETGKELHKRAYGPGQHGQKKVKLSDYGFQLQEKQKLRFTYGVSEKQFRKTFDNASKLKGIHGEMFLVLLESRLDNVVYRLGFAKTRAQARQLVNHGHILVDGKKVDIASYRLKPGQTVTLREKSKNLNIVQEALNSKFVRADYVSLDKELVGKYVRYPQRNEFLPDINEQLIVEYYNR.

The S4 RNA-binding domain occupies 91 to 154 (SRLDNVVYRL…KNLNIVQEAL (64 aa)).

It belongs to the universal ribosomal protein uS4 family. Part of the 30S ribosomal subunit. Contacts protein S5. The interaction surface between S4 and S5 is involved in control of translational fidelity.

In terms of biological role, one of the primary rRNA binding proteins, it binds directly to 16S rRNA where it nucleates assembly of the body of the 30S subunit. With S5 and S12 plays an important role in translational accuracy. In Aster yellows witches'-broom phytoplasma (strain AYWB), this protein is Small ribosomal subunit protein uS4.